We begin with the raw amino-acid sequence, 496 residues long: Transmembrane transporter swnT (496 aa).

5 helical membrane-spanning segments follow: residues Leu40–Leu60, Val72–Glu92, Ala124–Leu144, Trp162–Glu182, and Ala191–Ala211. The N-linked (GlcNAc...) asparagine glycan is linked to Asn225. 6 consecutive transmembrane segments (helical) span residues Leu270–Val290, Ala314–Ile334, Pro368–Ala388, Leu396–Leu416, Gly434–Phe454, and Tyr467–Ala487.

The protein belongs to the amino acid-polyamine-organocation (APC) superfamily. Amino acid/choline transporter (ACT) (TC 2.A.3.4) family.

It localises to the membrane. Its function is as follows. Transmembrane transporter; part of the gene cluster that mediates the biosynthesis of swainsonine, a cytotoxic fungal alkaloid and a potential cancer therapy drug. Does not mediate the secretion of SW and the exact role of swnT in SW biosynthesis remains to be determined. The polypeptide is Transmembrane transporter swnT (Metarhizium robertsii (strain ARSEF 23 / ATCC MYA-3075) (Metarhizium anisopliae (strain ARSEF 23))).